The following is a 471-amino-acid chain: Probable ribonuclease FAU-1 (471 aa).

Belongs to the FAU-1 family.

Probable RNase involved in rRNA stability through maturation and/or degradation of precursor rRNAs. Binds to RNA in loop regions with AU-rich sequences. The chain is Probable ribonuclease FAU-1 from Thermococcus gammatolerans (strain DSM 15229 / JCM 11827 / EJ3).